The following is a 956-amino-acid chain: Transient receptor potential channel pyrexia (956 aa).

The Cytoplasmic portion of the chain corresponds to 1–491; that stretch reads MENVRFSIIE…LFLKWRRIRK (491 aa). 8 ANK repeats span residues 132-161, 166-195, 198-227, 231-260, 265-294, 298-327, 331-362, and 366-395; these read RGRTPLHFACCRANAPIAKVLLDFGADPNR, KEVTSLHCAASSKSVECILLLLRRKASINI, EKRSALHYAIDVNAVDCVEILLKYGADPNT, YTETPLHTASAAGFAKCVQLLLSHNADVRS, GKVTALHLAAENDYVECARLLLEHRAEVDC, SHQTPLHLACLSQSIGTVDLLISYGANVNA, DGRTALHAAIVKQSRSLDCCNALLKAGADVNK, and YGYTPLHIAALNEFSSCVYTFIEHGADITA. A helical transmembrane segment spans residues 492–512; that stretch reads FFLMSLAYHTLFVILFTFYVI. Residues 513-525 are Extracellular-facing; it reads WVYVRCCKKEELC. A helical transmembrane segment spans residues 526–546; that stretch reads VAPGYVSTIGYLVIILNLILL. At 547–565 the chain is on the cytoplasmic side; the sequence is GKEVFQMAHGLRGYAKYWE. The chain crosses the membrane as a helical span at residues 566–584; that stretch reads NWLQWTIGTGVLLCVTPET. At 585 to 601 the chain is on the extracellular side; it reads VRTDDLTAVPVWQHHVA. The chain crosses the membrane as a helical span at residues 602-622; it reads AIVILLVWLELMMLVGRFPIF. Residues 623-638 lie on the Cytoplasmic side of the membrane; it reads GVYVQMFTKVAVNFAK. A helical membrane pass occupies residues 639–659; that stretch reads FLLAYICLLVAFGLSFAVLFN. Residues 660–701 are Extracellular-facing; that stretch reads DYPAFENITWSFLKSITMMSGELEFEDIFYGDYAVKFPVTAH. Residue Asn666 is glycosylated (N-linked (GlcNAc...) asparagine). Residues 702–722 form a helical membrane-spanning segment; the sequence is IIFLSFVLLVTVILTNLMVGL. Over 723 to 956 the chain is Cytoplasmic; it reads AVSDIQGLQV…VASSHIRRHR (234 aa).

Belongs to the transient receptor (TC 1.A.4) family. STrpC subfamily. Homooligomer; between isoform A and isoform B. Expressed in various peripheral nerves and the central nerves in embryos. In adults, it is expressed in sensory neurons lying beneath the bristles around eyes, neurons innervating the bristles on the back of thorax and neurons in maxillary palps, proboscis and antennae. Expressed in multidendritic neurons, which mediate temperature sensing, as well as non-multidendritic neurons in larval epidermis. Localizes ubiquitously throughout neurites.

Its subcellular location is the membrane. Receptor-activated non-selective cation channel involved in protection or tolerance from high temperature stress. Activated by temperatures above 40 degrees Celsius. More permeable to K(+) than to Na(+). May act in stress protection allow flies to survive in natural environments. This chain is Transient receptor potential channel pyrexia (pyx), found in Drosophila melanogaster (Fruit fly).